We begin with the raw amino-acid sequence, 374 residues long: MGHEDRATALLTVDLDAIADNWLALRGRLRPGASCAGVVKANAYGLGARKVVPALLAAGCRDFVVAQIDEGLDILDLLPADARLFVLSGPPEGAEDEVLDSALIPVLNSPDQIDRWAKACARAGRKAPAALHVDTGMRRLGLTPLELDALLADPRPLAAFTPVLVMTHLACADEPDHPLNAEQRALFAAAAARFPGLRASLANTSGIFLGPEWHFDLARPGIGLYGGNPTVGTANPMRQVVKLQGKILQVRRIDTPLSVGYGATHTAPAGSTIATVGVGYADGFPRSAGNRAMGLLAGRSVPVVGRVSMDLLTFDVSDVPENLARPGAMIDLLGPDLSVDALADRADTVSYEILTRLGARYPRRYGGVREGSGQ.

Lys40 (proton acceptor; specific for D-alanine) is an active-site residue. Position 40 is an N6-(pyridoxal phosphate)lysine (Lys40). Arg139 is a substrate binding site. The active-site Proton acceptor; specific for L-alanine is the Tyr261. Substrate is bound at residue Met309.

It belongs to the alanine racemase family. The cofactor is pyridoxal 5'-phosphate.

It carries out the reaction L-alanine = D-alanine. The protein operates within amino-acid biosynthesis; D-alanine biosynthesis; D-alanine from L-alanine: step 1/1. Its function is as follows. Catalyzes the interconversion of L-alanine and D-alanine. May also act on other amino acids. This Rhodospirillum rubrum (strain ATCC 11170 / ATH 1.1.1 / DSM 467 / LMG 4362 / NCIMB 8255 / S1) protein is Alanine racemase (alr).